The following is a 727-amino-acid chain: MKSPKPPNLSDKSLKPNFFHGHRKPSQNRPTVYGGLFSNRQSIPRVSPQPQSNSLAHRTPFDLRKWDPETHLPPPSPPSHSTVISAASERLSPIARFVLDAFRKNRNHWGPSVVSELNKLRRVTPSIVAEVLKLGNDAAVAAKFFHWAGKQKGYKHDFAAYNAFAYCLNRNGHFRAADQLPELMDSQGRPPSEKQFEILIRMHADNRRGLRVYYVYEKMKKFGFKPRVFLYNRIMDALVKNGYFDLALAVYEDFKEDGLVEESTTFMILVKGLCKAGRIEEMLEILQRMRENLCKPDVFAYTAMIKTLVSEGNLDASLRVWDEMRRDEIKPDVMAYGTLVVGLCKDGRVERGYELFMEMKGKQILIDREIYRVLIEGFVADGKVRSACNLWEDLVDSGYIADIGIYNAVIKGLCSVNQVDKAYKLFQVAIEEELEPDFETLSPIMVAYVVMNRLSDFSNVLERIGELGYPVSDYLTQFFKLLCADEEKNAMALDVFYILKTKGHGSVSVYNILMEALYKMGDIQKSLSLFYEMRKLGFEPDSSSYSIAICCFVEKGDVKAACSFHEKIIEMSCVPSIAAYLSLTKGLCQIGEIDAVMLLVRECLGNVESGPMEFKYALTVCHVCKGSNAEKVMKVVDEMNQEGVFINEVIYCAIISGMSKHGTIKVAREVFTELKKRKVMTEADMVVYEEMLIEQTKKKTADLVLSGIKFFGLESKLRAKGCRLLDN.

A disordered region spans residues 1-84 (MKSPKPPNLS…PSPPSHSTVI (84 aa)). Polar residues predominate over residues 38-56 (SNRQSIPRVSPQPQSNSLA). Basic and acidic residues predominate over residues 59–70 (TPFDLRKWDPET). 14 PPR repeats span residues 157 to 191 (DFAAYNAFAYCLNRNGHFRAADQLPELMDSQGRPP), 192 to 226 (SEKQFEILIRMHADNRRGLRVYYVYEKMKKFGFKP), 227 to 261 (RVFLYNRIMDALVKNGYFDLALAVYEDFKEDGLVE), 262 to 296 (ESTTFMILVKGLCKAGRIEEMLEILQRMRENLCKP), 297 to 331 (DVFAYTAMIKTLVSEGNLDASLRVWDEMRRDEIKP), 332 to 366 (DVMAYGTLVVGLCKDGRVERGYELFMEMKGKQILI), 367 to 401 (DREIYRVLIEGFVADGKVRSACNLWEDLVDSGYIA), 402 to 436 (DIGIYNAVIKGLCSVNQVDKAYKLFQVAIEEELEP), 437 to 471 (DFETLSPIMVAYVVMNRLSDFSNVLERIGELGYPV), 506 to 540 (SVSVYNILMEALYKMGDIQKSLSLFYEMRKLGFEP), 541 to 575 (DSSSYSIAICCFVEKGDVKAACSFHEKIIEMSCVP), 576 to 606 (SIAAYLSLTKGLCQIGEIDAVMLLVRECLGN), 612 to 646 (MEFKYALTVCHVCKGSNAEKVMKVVDEMNQEGVFI), and 647 to 681 (NEVIYCAIISGMSKHGTIKVAREVFTELKKRKVMT).

Belongs to the PPR family. P subfamily.

The chain is Pentatricopeptide repeat-containing protein At4g20740 from Arabidopsis thaliana (Mouse-ear cress).